The chain runs to 122 residues: Large ribosomal subunit protein uL14 (122 aa).

It belongs to the universal ribosomal protein uL14 family. As to quaternary structure, part of the 50S ribosomal subunit. Forms a cluster with proteins L3 and L19. In the 70S ribosome, L14 and L19 interact and together make contacts with the 16S rRNA in bridges B5 and B8.

Functionally, binds to 23S rRNA. Forms part of two intersubunit bridges in the 70S ribosome. The chain is Large ribosomal subunit protein uL14 from Allorhizobium ampelinum (strain ATCC BAA-846 / DSM 112012 / S4) (Agrobacterium vitis (strain S4)).